We begin with the raw amino-acid sequence, 540 residues long: Sesquiterpene synthase 15b (540 aa).

The Mg(2+) site is built by Asp-292, Asp-296, and Glu-445. Residues 292-296 carry the DDXXD motif motif; that stretch reads DDIYD.

Belongs to the terpene synthase family. Tpsa subfamily. Requires Mg(2+) as cofactor. The cofactor is Mn(2+).

It carries out the reaction (2E,6E)-farnesyl diphosphate = germacrene A + diphosphate. It participates in secondary metabolite biosynthesis; terpenoid biosynthesis. In terms of biological role, sesquiterpene synthase involved in the biosynthesis of volatile compounds. Mediates the conversion of (2E,6E)-farnesyl diphosphate (FPP) into germacrene A. This Solanum habrochaites (Wild tomato) protein is Sesquiterpene synthase 15b.